A 446-amino-acid polypeptide reads, in one-letter code: Methylenetetrahydrofolate--tRNA-(uracil-5-)-methyltransferase TrmFO (446 aa).

An FAD-binding site is contributed by 9-14 (GGGMAG).

This sequence belongs to the MnmG family. TrmFO subfamily. FAD serves as cofactor.

The protein resides in the cytoplasm. It carries out the reaction uridine(54) in tRNA + (6R)-5,10-methylene-5,6,7,8-tetrahydrofolate + NADH + H(+) = 5-methyluridine(54) in tRNA + (6S)-5,6,7,8-tetrahydrofolate + NAD(+). The enzyme catalyses uridine(54) in tRNA + (6R)-5,10-methylene-5,6,7,8-tetrahydrofolate + NADPH + H(+) = 5-methyluridine(54) in tRNA + (6S)-5,6,7,8-tetrahydrofolate + NADP(+). Its function is as follows. Catalyzes the folate-dependent formation of 5-methyl-uridine at position 54 (M-5-U54) in all tRNAs. The chain is Methylenetetrahydrofolate--tRNA-(uracil-5-)-methyltransferase TrmFO from Ruegeria sp. (strain TM1040) (Silicibacter sp.).